Reading from the N-terminus, the 678-residue chain is Catalase (678 aa).

Residues 1 to 26 (MSNEREMQNKKDQQLESFRVEDEGKK) are compositionally biased toward basic and acidic residues. Residues 1–32 (MSNEREMQNKKDQQLESFRVEDEGKKLTTNQG) form a disordered region. Catalysis depends on residues His-75 and Asn-148. Heme is bound at residue Tyr-362.

Belongs to the catalase family. HPII subfamily. The cofactor is heme.

It is found in the cytoplasm. The catalysed reaction is 2 H2O2 = O2 + 2 H2O. Its function is as follows. Decomposes hydrogen peroxide into water and oxygen; serves to protect cells from the toxic effects of hydrogen peroxide. The sequence is that of Catalase (katE) from Alkalihalophilus pseudofirmus (strain ATCC BAA-2126 / JCM 17055 / OF4) (Bacillus pseudofirmus).